A 281-amino-acid chain; its full sequence is CCAAT/enhancer-binding protein epsilon (281 aa).

The interval 1–30 (MSHGTYYECEPRGGQQPLEFSGGRAGPGEL) is disordered. A Glycyl lysine isopeptide (Lys-Gly) (interchain with G-Cter in SUMO2) cross-link involves residue Lys-121. Position 181 is a phosphoserine (Ser-181). In terms of domain architecture, bZIP spans 204–267 (SLEYRLRRER…DTLRNLFRQI (64 aa)). Residues 208 to 245 (RLRRERNNIAVRKSRDKAKRRIMETQQKVLEYMAENER) are basic motif. Positions 246–267 (LRSRVDQLTQELDTLRNLFRQI) are leucine-zipper.

The protein belongs to the bZIP family. C/EBP subfamily. As to quaternary structure, binds DNA as a homodimer and as a heterodimer. Can form stable heterodimers with CEBPA, CEBPB and CEBPD. Interacts with GATA1 and SPI1. Interacts with SMARCD2.

The protein resides in the nucleus. In terms of biological role, transcriptional activator. C/EBP are DNA-binding proteins that recognize two different motifs: the CCAAT homology common to many promoters and the enhanced core homology common to many enhancers. Required for the promyelocyte-myelocyte transition in myeloid differentiation. The chain is CCAAT/enhancer-binding protein epsilon (Cebpe) from Rattus norvegicus (Rat).